Consider the following 647-residue polypeptide: 1-deoxy-D-xylulose-5-phosphate synthase (647 aa).

Residues His74 and 115 to 117 (GHS) contribute to the thiamine diphosphate site. Residue Asp146 coordinates Mg(2+). Thiamine diphosphate is bound by residues 147–148 (GA), Asn175, Tyr286, and Glu367. Residue Asn175 participates in Mg(2+) binding.

This sequence belongs to the transketolase family. DXPS subfamily. As to quaternary structure, homodimer. Mg(2+) is required as a cofactor. Thiamine diphosphate serves as cofactor.

It catalyses the reaction D-glyceraldehyde 3-phosphate + pyruvate + H(+) = 1-deoxy-D-xylulose 5-phosphate + CO2. It participates in metabolic intermediate biosynthesis; 1-deoxy-D-xylulose 5-phosphate biosynthesis; 1-deoxy-D-xylulose 5-phosphate from D-glyceraldehyde 3-phosphate and pyruvate: step 1/1. Functionally, catalyzes the acyloin condensation reaction between C atoms 2 and 3 of pyruvate and glyceraldehyde 3-phosphate to yield 1-deoxy-D-xylulose-5-phosphate (DXP). In Heliobacterium modesticaldum (strain ATCC 51547 / Ice1), this protein is 1-deoxy-D-xylulose-5-phosphate synthase.